A 759-amino-acid polypeptide reads, in one-letter code: DNA topoisomerase 4 subunit A (759 aa).

One can recognise a Topo IIA-type catalytic domain in the interval 44-516 (LPDVRDGLKP…VFGEAPQVDA (473 aa)). Tyrosine 132 serves as the catalytic O-(5'-phospho-DNA)-tyrosine intermediate.

The protein belongs to the type II topoisomerase GyrA/ParC subunit family. ParC type 1 subfamily. As to quaternary structure, heterotetramer composed of ParC and ParE.

It localises to the cell membrane. It carries out the reaction ATP-dependent breakage, passage and rejoining of double-stranded DNA.. Topoisomerase IV is essential for chromosome segregation. It relaxes supercoiled DNA. Performs the decatenation events required during the replication of a circular DNA molecule. In Caulobacter vibrioides (strain ATCC 19089 / CIP 103742 / CB 15) (Caulobacter crescentus), this protein is DNA topoisomerase 4 subunit A.